The sequence spans 585 residues: Isocitrate dehydrogenase kinase/phosphatase (585 aa).

Residues 315–321 (APGVKGM) and Lys-336 contribute to the ATP site. Residue Asp-371 is part of the active site.

Belongs to the AceK family.

It is found in the cytoplasm. It catalyses the reaction L-seryl-[isocitrate dehydrogenase] + ATP = O-phospho-L-seryl-[isocitrate dehydrogenase] + ADP + H(+). Its function is as follows. Bifunctional enzyme which can phosphorylate or dephosphorylate isocitrate dehydrogenase (IDH) on a specific serine residue. This is a regulatory mechanism which enables bacteria to bypass the Krebs cycle via the glyoxylate shunt in response to the source of carbon. When bacteria are grown on glucose, IDH is fully active and unphosphorylated, but when grown on acetate or ethanol, the activity of IDH declines drastically concomitant with its phosphorylation. This is Isocitrate dehydrogenase kinase/phosphatase from Photorhabdus laumondii subsp. laumondii (strain DSM 15139 / CIP 105565 / TT01) (Photorhabdus luminescens subsp. laumondii).